We begin with the raw amino-acid sequence, 125 residues long: MORF4 family-associated protein 1 (125 aa).

The segment at 76–99 is disordered; it reads ESALNHLQGAGGAEPRGPRAEKAD. Residues 94–124 adopt a coiled-coil conformation; it reads RAEKADEKAQEMAKMAEMLVQLVRRIEKSES.

It belongs to the MORF4 family-associated protein family. In terms of assembly, found in a complex composed of MORF4L1, MRFAP1 and RB1. Interacts via its N-terminus with MORF4L1. Interacts with CSTB and MORF4L2.

It localises to the nucleus. The protein resides in the cytoplasm. It is found in the perinuclear region. The chain is MORF4 family-associated protein 1 from Rattus norvegicus (Rat).